Reading from the N-terminus, the 320-residue chain is Malate dehydrogenase (320 aa).

NAD(+) contacts are provided by residues 10 to 15 (GAGNIG) and Asp34. 2 residues coordinate substrate: Arg83 and Arg89. NAD(+)-binding positions include Asn96 and 119–121 (ITN). Substrate is bound by residues Asn121 and Arg152. His176 (proton acceptor) is an active-site residue.

It belongs to the LDH/MDH superfamily. MDH type 3 family.

It catalyses the reaction (S)-malate + NAD(+) = oxaloacetate + NADH + H(+). Its function is as follows. Catalyzes the reversible oxidation of malate to oxaloacetate. In Sphingopyxis alaskensis (strain DSM 13593 / LMG 18877 / RB2256) (Sphingomonas alaskensis), this protein is Malate dehydrogenase.